The primary structure comprises 921 residues: Probable dipeptidyl-aminopeptidase B (921 aa).

The interval M1 to T33 is disordered. The Cytoplasmic portion of the chain corresponds to M1 to K109. The segment covering N8–E17 has biased composition (polar residues). Residues L110–L130 form a helical; Signal-anchor for type II membrane protein membrane-spanning segment. Over G131–V921 the chain is Vacuolar. Residue N362 is glycosylated (N-linked (GlcNAc...) asparagine). S768 functions as the Charge relay system in the catalytic mechanism. N822 is a glycosylation site (N-linked (GlcNAc...) asparagine). Active-site charge relay system residues include D845 and H878.

This sequence belongs to the peptidase S9B family.

Its subcellular location is the vacuole membrane. The catalysed reaction is Release of an N-terminal dipeptide, Xaa-Yaa-|-Zaa-, from a polypeptide, preferentially when Yaa is Pro, provided Zaa is neither Pro nor hydroxyproline.. Type IV dipeptidyl-peptidase which removes N-terminal dipeptides sequentially from polypeptides having unsubstituted N-termini provided that the penultimate residue is proline. This is Probable dipeptidyl-aminopeptidase B (dapB) from Sclerotinia sclerotiorum (strain ATCC 18683 / 1980 / Ss-1) (White mold).